The chain runs to 431 residues: tRNA(Ile)-lysidine synthase (431 aa).

25 to 30 serves as a coordination point for ATP; that stretch reads SGGPDS.

The protein belongs to the tRNA(Ile)-lysidine synthase family.

It is found in the cytoplasm. It catalyses the reaction cytidine(34) in tRNA(Ile2) + L-lysine + ATP = lysidine(34) in tRNA(Ile2) + AMP + diphosphate + H(+). Its function is as follows. Ligates lysine onto the cytidine present at position 34 of the AUA codon-specific tRNA(Ile) that contains the anticodon CAU, in an ATP-dependent manner. Cytidine is converted to lysidine, thus changing the amino acid specificity of the tRNA from methionine to isoleucine. This chain is tRNA(Ile)-lysidine synthase, found in Lactobacillus johnsonii (strain CNCM I-12250 / La1 / NCC 533).